A 100-amino-acid polypeptide reads, in one-letter code: Putative protein adenylyltransferase MJ1379 (100 aa).

A GSX(10)DXD motif motif is present at residues 31–45 (GSYARGEQTEESDID). Mg(2+) contacts are provided by D43, D45, and D77.

The protein belongs to the MntA antitoxin family. Probably forms a complex with cognate toxin MJ1380. The cofactor is Mg(2+).

It catalyses the reaction L-tyrosyl-[protein] + ATP = O-(5'-adenylyl)-L-tyrosyl-[protein] + diphosphate. It carries out the reaction O-(5'-adenylyl)-L-tyrosyl-[protein] + ATP = O-[5'-(adenylyl-(5'-&gt;3')-adenylyl)]-L-tyrosyl-[protein] + diphosphate. Its function is as follows. Probable antitoxin component of a putative type VII toxin-antitoxin (TA) system. Neutralizes cognate toxic MJ1380 by di-AMPylation. The protein is Putative protein adenylyltransferase MJ1379 of Methanocaldococcus jannaschii (strain ATCC 43067 / DSM 2661 / JAL-1 / JCM 10045 / NBRC 100440) (Methanococcus jannaschii).